A 693-amino-acid chain; its full sequence is Elongation factor G (693 aa).

The tr-type G domain maps to glutamate 8–threonine 282. GTP is bound by residues alanine 17 to threonine 24, aspartate 81 to histidine 85, and asparagine 135 to aspartate 138.

It belongs to the TRAFAC class translation factor GTPase superfamily. Classic translation factor GTPase family. EF-G/EF-2 subfamily.

Its subcellular location is the cytoplasm. Functionally, catalyzes the GTP-dependent ribosomal translocation step during translation elongation. During this step, the ribosome changes from the pre-translocational (PRE) to the post-translocational (POST) state as the newly formed A-site-bound peptidyl-tRNA and P-site-bound deacylated tRNA move to the P and E sites, respectively. Catalyzes the coordinated movement of the two tRNA molecules, the mRNA and conformational changes in the ribosome. The protein is Elongation factor G of Ruminiclostridium cellulolyticum (strain ATCC 35319 / DSM 5812 / JCM 6584 / H10) (Clostridium cellulolyticum).